A 476-amino-acid chain; its full sequence is UDP-N-acetylmuramate--L-alanine ligase (476 aa).

125 to 131 (GTHGKTT) is an ATP binding site.

This sequence belongs to the MurCDEF family.

The protein resides in the cytoplasm. It carries out the reaction UDP-N-acetyl-alpha-D-muramate + L-alanine + ATP = UDP-N-acetyl-alpha-D-muramoyl-L-alanine + ADP + phosphate + H(+). It functions in the pathway cell wall biogenesis; peptidoglycan biosynthesis. Cell wall formation. This Histophilus somni (strain 129Pt) (Haemophilus somnus) protein is UDP-N-acetylmuramate--L-alanine ligase.